A 101-amino-acid chain; its full sequence is Protein snet-1 (101 aa).

Positions 1-20 are cleaved as a signal peptide; that stretch reads MARFTPLLMILLALVPLYYS.

May be degraded by the nep-2 peptidase. Expressed in coelomocytes, the ASK sensory neurons and interneurons AIB, AIM and PVQ.

The protein resides in the secreted. It is found in the perikaryon. In terms of biological role, negatively regulates chemotaxis and olfactory plasticity which is the change from positive chemotaxis to dispersal after prolonged exposure to an odorant. May be down-regulated in response to pheromone exposure, resulting in promotion of olfactory plasticity. The sequence is that of Protein snet-1 from Caenorhabditis elegans.